The chain runs to 220 residues: Small ribosomal subunit protein uS5 (220 aa).

The disordered stretch occupies residues 1–39 (MAEQPAGQAGTTDNRDARGDREGRRRDSGRGSRERDGEK). The segment covering 13–39 (DNRDARGDREGRRRDSGRGSRERDGEK) has biased composition (basic and acidic residues). The S5 DRBM domain maps to 42–105 (YLERVVAINR…EEARKSFFRV (64 aa)).

Belongs to the universal ribosomal protein uS5 family. In terms of assembly, part of the 30S ribosomal subunit. Contacts proteins S4 and S8.

Functionally, with S4 and S12 plays an important role in translational accuracy. In terms of biological role, located at the back of the 30S subunit body where it stabilizes the conformation of the head with respect to the body. This chain is Small ribosomal subunit protein uS5, found in Mycobacterium bovis (strain ATCC BAA-935 / AF2122/97).